The primary structure comprises 207 residues: Uracil phosphoribosyltransferase (207 aa).

5-phospho-alpha-D-ribose 1-diphosphate is bound by residues arginine 77, arginine 102, and 129-137; that span reads DPMLATGGS. Uracil contacts are provided by residues isoleucine 192 and 197–199; that span reads GDA. Aspartate 198 serves as a coordination point for 5-phospho-alpha-D-ribose 1-diphosphate.

This sequence belongs to the UPRTase family. Requires Mg(2+) as cofactor.

It catalyses the reaction UMP + diphosphate = 5-phospho-alpha-D-ribose 1-diphosphate + uracil. The protein operates within pyrimidine metabolism; UMP biosynthesis via salvage pathway; UMP from uracil: step 1/1. Its activity is regulated as follows. Allosterically activated by GTP. In terms of biological role, catalyzes the conversion of uracil and 5-phospho-alpha-D-ribose 1-diphosphate (PRPP) to UMP and diphosphate. This is Uracil phosphoribosyltransferase from Ureaplasma parvum serovar 3 (strain ATCC 27815 / 27 / NCTC 11736).